A 104-amino-acid chain; its full sequence is Small ribosomal subunit protein bS6 (104 aa).

Belongs to the bacterial ribosomal protein bS6 family.

In terms of biological role, binds together with bS18 to 16S ribosomal RNA. The polypeptide is Small ribosomal subunit protein bS6 (Elusimicrobium minutum (strain Pei191)).